The following is a 301-amino-acid chain: 4-hydroxy-tetrahydrodipicolinate synthase (301 aa).

Threonine 55 lines the pyruvate pocket. The Proton donor/acceptor role is filled by tyrosine 143. Catalysis depends on lysine 171, which acts as the Schiff-base intermediate with substrate. Isoleucine 213 is a binding site for pyruvate.

Belongs to the DapA family. In terms of assembly, homotetramer; dimer of dimers.

It is found in the cytoplasm. It catalyses the reaction L-aspartate 4-semialdehyde + pyruvate = (2S,4S)-4-hydroxy-2,3,4,5-tetrahydrodipicolinate + H2O + H(+). Its pathway is amino-acid biosynthesis; L-lysine biosynthesis via DAP pathway; (S)-tetrahydrodipicolinate from L-aspartate: step 3/4. Catalyzes the condensation of (S)-aspartate-beta-semialdehyde [(S)-ASA] and pyruvate to 4-hydroxy-tetrahydrodipicolinate (HTPA). In Psychrobacter arcticus (strain DSM 17307 / VKM B-2377 / 273-4), this protein is 4-hydroxy-tetrahydrodipicolinate synthase.